The following is a 55-amino-acid chain: Large ribosomal subunit protein bL33 (55 aa).

Belongs to the bacterial ribosomal protein bL33 family.

The sequence is that of Large ribosomal subunit protein bL33 from Alcanivorax borkumensis (strain ATCC 700651 / DSM 11573 / NCIMB 13689 / SK2).